Reading from the N-terminus, the 259-residue chain is Phosphate import ATP-binding protein PstB (259 aa).

Residues Leu-13–Ile-254 form the ABC transporter domain. Gly-45 to Ser-52 is an ATP binding site.

Belongs to the ABC transporter superfamily. Phosphate importer (TC 3.A.1.7) family. In terms of assembly, the complex is composed of two ATP-binding proteins (PstB), two transmembrane proteins (PstC and PstA) and a solute-binding protein (PstS).

The protein localises to the cell inner membrane. The catalysed reaction is phosphate(out) + ATP + H2O = ADP + 2 phosphate(in) + H(+). In terms of biological role, part of the ABC transporter complex PstSACB involved in phosphate import. Responsible for energy coupling to the transport system. In Pasteurella multocida (strain Pm70), this protein is Phosphate import ATP-binding protein PstB.